The following is a 912-amino-acid chain: Coiled-coil domain-containing protein 162 (912 aa).

Coiled coils occupy residues 1 to 35 and 220 to 276; these read MFKS…FSFA and VLLG…VVMS.

The protein is Coiled-coil domain-containing protein 162 of Mus musculus (Mouse).